The primary structure comprises 442 residues: uncharacterized protein (442 aa).

The ABC transporter domain maps to 1–238 (MKAEGLSGGY…QSIKAVYDTD (238 aa)). 33-40 (GPNGSGKT) provides a ligand contact to ATP.

This sequence belongs to the ABC transporter superfamily. As to quaternary structure, the complex is composed of two ATP-binding proteins (YvrA), two transmembrane proteins (YvrB) and a solute-binding protein (YvrC).

Its function is as follows. Probably part of an ABC transporter complex. Probably responsible for energy coupling to the transport system. This is an uncharacterized protein from Bacillus subtilis (strain 168).